Reading from the N-terminus, the 119-residue chain is uncharacterized protein (119 aa).

Cys13 is an active-site residue.

It belongs to the ArsC family.

This is an uncharacterized protein from Escherichia coli (strain K12).